Reading from the N-terminus, the 89-residue chain is Small ribosomal subunit protein bS20 (89 aa).

The interval M1–K27 is disordered. Basic and acidic residues predominate over residues A7–R18.

The protein belongs to the bacterial ribosomal protein bS20 family.

Binds directly to 16S ribosomal RNA. This chain is Small ribosomal subunit protein bS20, found in Buchnera aphidicola subsp. Schizaphis graminum (strain Sg).